The chain runs to 214 residues: Probable nicotinate-nucleotide adenylyltransferase (214 aa).

This sequence belongs to the NadD family.

It carries out the reaction nicotinate beta-D-ribonucleotide + ATP + H(+) = deamido-NAD(+) + diphosphate. The protein operates within cofactor biosynthesis; NAD(+) biosynthesis; deamido-NAD(+) from nicotinate D-ribonucleotide: step 1/1. Catalyzes the reversible adenylation of nicotinate mononucleotide (NaMN) to nicotinic acid adenine dinucleotide (NaAD). The sequence is that of Probable nicotinate-nucleotide adenylyltransferase from Buchnera aphidicola subsp. Acyrthosiphon pisum (strain 5A).